The sequence spans 127 residues: Small ribosomal subunit protein uS13 (127 aa).

It belongs to the universal ribosomal protein uS13 family. In terms of assembly, part of the 30S ribosomal subunit. Forms a loose heterodimer with protein S19. Forms two bridges to the 50S subunit in the 70S ribosome.

Functionally, located at the top of the head of the 30S subunit, it contacts several helices of the 16S rRNA. In the 70S ribosome it contacts the 23S rRNA (bridge B1a) and protein L5 of the 50S subunit (bridge B1b), connecting the 2 subunits; these bridges are implicated in subunit movement. Contacts the tRNAs in the A and P-sites. The polypeptide is Small ribosomal subunit protein uS13 (Pelagibacter ubique (strain HTCC1062)).